Reading from the N-terminus, the 71-residue chain is General transcription factor IIH subunit 5 (71 aa).

Residue T69 is modified to Phosphothreonine.

This sequence belongs to the TFB5 family. Component of the 7-subunit TFIIH core complex composed of XPB/ERCC3, XPD/ERCC2, GTF2H1, GTF2H2, GTF2H3, GTF2H4 and GTF2H5, which is active in NER. The core complex associates with the 3-subunit CDK-activating kinase (CAK) module composed of CCNH/cyclin H, CDK7 and MNAT1 to form the 10-subunit holoenzyme (holo-TFIIH) active in transcription. Part of TBP-based Pol II pre-initiation complex (PIC), in which Pol II core assembles with general transcription factors and other specific initiation factors including GTF2E1, GTF2E2, GTF2F1, GTF2F2, TCEA1, ERCC2, ERCC3, GTF2H2, GTF2H3, GTF2H4, GTF2H5, GTF2A1, GTF2A2, GTF2B and TBP; this large multi-subunit PIC complex mediates DNA unwinding and targets Pol II core to the transcription start site where the first phosphodiester bond forms.

The protein localises to the nucleus. It is found in the cytoplasm. Functionally, component of the general transcription and DNA repair factor IIH (TFIIH) core complex, which is involved in general and transcription-coupled nucleotide excision repair (NER) of damaged DNA and, when complexed to CAK, in RNA transcription by RNA polymerase II. In NER, TFIIH acts by opening DNA around the lesion to allow the excision of the damaged oligonucleotide and its replacement by a new DNA fragment. In transcription, TFIIH has an essential role in transcription initiation. When the pre-initiation complex (PIC) has been established, TFIIH is required for promoter opening and promoter escape. Phosphorylation of the C-terminal tail (CTD) of the largest subunit of RNA polymerase II by the kinase module CAK controls the initiation of transcription. Necessary for the stability of the TFIIH complex and for the presence of normal levels of TFIIH in the cell. This Mus musculus (Mouse) protein is General transcription factor IIH subunit 5.